A 126-amino-acid polypeptide reads, in one-letter code: Fluoride-specific ion channel FluC (126 aa).

Transmembrane regions (helical) follow at residues 2–22 and 36–56; these read IKSL…RWLL and GTLV…AYFL. The Na(+) site is built by glycine 75 and serine 78. 2 helical membrane passes run 80 to 100 and 105 to 125; these read FSTF…IWAL and VHVI…TILF.

It belongs to the fluoride channel Fluc/FEX (TC 1.A.43) family. Homodimer.

Its subcellular location is the cell inner membrane. The enzyme catalyses fluoride(in) = fluoride(out). With respect to regulation, na(+) is not transported, but it plays an essential structural role and its presence is essential for fluoride channel function. Functionally, fluoride-specific ion channel. Important for reducing fluoride concentration in the cell, thus reducing its toxicity. Is highly specific for fluoride ions and cannot transport chloride ions. The chain is Fluoride-specific ion channel FluC from Escherichia coli O1:K1 / APEC.